The chain runs to 430 residues: Putative aspergillopepsin A-like aspartic endopeptidase MCYG_07979 (430 aa).

A signal peptide spans 1-17 (MHLSSLLVAVLLPLALS). The propeptide at 18–87 (KPTPRKKPGS…SKIAGGAPGA (70 aa)) is activation peptide. A disordered region spans residues 59-105 (STQGMDGYRPEPISRFQGNSKIAGGAPGAKDDGKDEKGEVENNPTSH). A compositionally biased stretch (basic and acidic residues) spans 87 to 98 (AKDDGKDEKGEV). Residues 109 to 427 (FLSPVTIGGQ…DYRGPSVSLA (319 aa)) enclose the Peptidase A1 domain. The active site involves D125. N306 carries N-linked (GlcNAc...) asparagine glycosylation. The active site involves D314. N352 is a glycosylation site (N-linked (GlcNAc...) asparagine).

It belongs to the peptidase A1 family.

It localises to the secreted. The chain is Putative aspergillopepsin A-like aspartic endopeptidase MCYG_07979 from Arthroderma otae (strain ATCC MYA-4605 / CBS 113480) (Microsporum canis).